Here is an 81-residue protein sequence, read N- to C-terminus: Conotoxin Cl9.6 (81 aa).

The first 20 residues, 1 to 20 (MSTLGMTLLILLLLLPLATP), serve as a signal peptide directing secretion. A propeptide spanning residues 21-40 (DDVGQPPKRDTLRNLLKIGT) is cleaved from the precursor. 3 disulfide bridges follow: Cys-46–Cys-69, Cys-54–Cys-76, and Cys-60–Cys-78.

In terms of tissue distribution, expressed by the venom duct.

The protein resides in the secreted. The chain is Conotoxin Cl9.6 from Californiconus californicus (California cone).